The chain runs to 349 residues: Protein RecA (349 aa).

ATP is bound at residue 65–72; it reads GPESSGKT. The segment at 329-349 is disordered; it reads KASDQTAAHDETEEEPDLLES. The segment covering 339-349 has biased composition (acidic residues); the sequence is ETEEEPDLLES.

This sequence belongs to the RecA family.

The protein resides in the cytoplasm. Its function is as follows. Can catalyze the hydrolysis of ATP in the presence of single-stranded DNA, the ATP-dependent uptake of single-stranded DNA by duplex DNA, and the ATP-dependent hybridization of homologous single-stranded DNAs. It interacts with LexA causing its activation and leading to its autocatalytic cleavage. This Acinetobacter baylyi (strain ATCC 33305 / BD413 / ADP1) protein is Protein RecA.